A 336-amino-acid polypeptide reads, in one-letter code: Fimbrial adhesin PapGII (336 aa).

Positions 1–20 are cleaved as a signal peptide; that stretch reads MKKWFPALLFSLCVSGESSA. 2 disulfides stabilise this stretch: cysteine 64-cysteine 138 and cysteine 217-cysteine 249. Residues glutamate 79 and 124-127 contribute to the D-galactose site; that span reads GYKW.

Belongs to the adhesin PapG family.

Its subcellular location is the secreted. It is found in the fimbrium. In terms of biological role, tip adhesin component of type P pili that plays a critical role in kidney infection through targeted interaction with the globoseries glycolipids containing the Gal-alpha(1-4)-Gal disaccharide present on uroepithelial cells. In turn, transcriptionally regulates host gene expression in kidney cells, leading to inflammatory pathway activation and renal tissue damage. Acts thereby as key determinant of invasive uropathogenic E.coli (UPEC), which cause pyelonephritis and urinary-source bacteremia. The protein is Fimbrial adhesin PapGII of Escherichia coli O6:H1 (strain CFT073 / ATCC 700928 / UPEC).